The sequence spans 453 residues: Phosphoglucosamine mutase (453 aa).

The Phosphoserine intermediate role is filled by Ser-105. 4 residues coordinate Mg(2+): Ser-105, Asp-244, Asp-246, and Asp-248. Ser-105 carries the post-translational modification Phosphoserine.

This sequence belongs to the phosphohexose mutase family. It depends on Mg(2+) as a cofactor. In terms of processing, activated by phosphorylation.

The enzyme catalyses alpha-D-glucosamine 1-phosphate = D-glucosamine 6-phosphate. Functionally, catalyzes the conversion of glucosamine-6-phosphate to glucosamine-1-phosphate. This is Phosphoglucosamine mutase from Chromohalobacter salexigens (strain ATCC BAA-138 / DSM 3043 / CIP 106854 / NCIMB 13768 / 1H11).